The primary structure comprises 590 residues: Arginine--tRNA ligase (590 aa).

The 'HIGH' region signature appears at 130 to 140; it reads ANPTGPMHVGH.

Belongs to the class-I aminoacyl-tRNA synthetase family. Monomer.

Its subcellular location is the cytoplasm. It carries out the reaction tRNA(Arg) + L-arginine + ATP = L-arginyl-tRNA(Arg) + AMP + diphosphate. This Methylobacterium nodulans (strain LMG 21967 / CNCM I-2342 / ORS 2060) protein is Arginine--tRNA ligase.